The chain runs to 497 residues: Cytosol aminopeptidase (497 aa).

Lys-267 and Asp-272 together coordinate Mn(2+). Lys-279 is a catalytic residue. Mn(2+) is bound by residues Asp-290, Asp-349, and Glu-351. Arg-353 is an active-site residue.

The protein belongs to the peptidase M17 family. Mn(2+) is required as a cofactor.

It is found in the cytoplasm. The enzyme catalyses Release of an N-terminal amino acid, Xaa-|-Yaa-, in which Xaa is preferably Leu, but may be other amino acids including Pro although not Arg or Lys, and Yaa may be Pro. Amino acid amides and methyl esters are also readily hydrolyzed, but rates on arylamides are exceedingly low.. It carries out the reaction Release of an N-terminal amino acid, preferentially leucine, but not glutamic or aspartic acids.. Presumably involved in the processing and regular turnover of intracellular proteins. Catalyzes the removal of unsubstituted N-terminal amino acids from various peptides. The polypeptide is Cytosol aminopeptidase (pepA) (Pseudomonas putida (Arthrobacter siderocapsulatus)).